We begin with the raw amino-acid sequence, 282 residues long: tRNA (guanine-N(7)-)-methyltransferase (282 aa).

The interval 1-36 (MAGPPNKKQKREDYRTARENGEESKELPKKKFYRQR) is disordered. Basic and acidic residues predominate over residues 10 to 29 (KREDYRTARENGEESKELPK). S-adenosyl-L-methionine-binding positions include G100, 123–124 (EI), 158–159 (NT), and C178. Residue D181 is part of the active site. 256–258 (TEE) serves as a coordination point for S-adenosyl-L-methionine.

This sequence belongs to the class I-like SAM-binding methyltransferase superfamily. TrmB family. Forms a complex with trm82.

It localises to the nucleus. It catalyses the reaction guanosine(46) in tRNA + S-adenosyl-L-methionine = N(7)-methylguanosine(46) in tRNA + S-adenosyl-L-homocysteine. It functions in the pathway tRNA modification; N(7)-methylguanine-tRNA biosynthesis. Catalyzes the formation of N(7)-methylguanine at position 46 (m7G46) in tRNA. This Botryotinia fuckeliana (strain B05.10) (Noble rot fungus) protein is tRNA (guanine-N(7)-)-methyltransferase (trm8).